The chain runs to 113 residues: Retrotransposon Gag-like protein 8C (113 aa).

The protein belongs to the FAM127 family.

This Homo sapiens (Human) protein is Retrotransposon Gag-like protein 8C.